The chain runs to 93 residues: UPF0473 protein BH1270 (93 aa).

It belongs to the UPF0473 family.

This chain is UPF0473 protein BH1270, found in Halalkalibacterium halodurans (strain ATCC BAA-125 / DSM 18197 / FERM 7344 / JCM 9153 / C-125) (Bacillus halodurans).